The sequence spans 261 residues: Proteasome subunit alpha type-4 (261 aa).

Phosphoserine occurs at positions 13 and 75. An N6-acetyllysine modification is found at lysine 127. The residue at position 173 (serine 173) is a Phosphoserine. The residue at position 176 (lysine 176) is an N6-acetyllysine. Residues 240-261 are disordered; it reads HEEEEAKAEREKKEKEQKEKDK.

The protein belongs to the peptidase T1A family. In terms of assembly, the 26S proteasome consists of a 20S proteasome core and two 19S regulatory subunits. The 20S proteasome core is a barrel-shaped complex made of 28 subunits that are arranged in four stacked rings. The two outer rings are each formed by seven alpha subunits, and the two inner rings are formed by seven beta subunits. The proteolytic activity is exerted by three beta-subunits PSMB5, PSMB6 and PSMB7.

The protein resides in the cytoplasm. It localises to the nucleus. In terms of biological role, component of the 20S core proteasome complex involved in the proteolytic degradation of most intracellular proteins. This complex plays numerous essential roles within the cell by associating with different regulatory particles. Associated with two 19S regulatory particles, forms the 26S proteasome and thus participates in the ATP-dependent degradation of ubiquitinated proteins. The 26S proteasome plays a key role in the maintenance of protein homeostasis by removing misfolded or damaged proteins that could impair cellular functions, and by removing proteins whose functions are no longer required. Associated with the PA200 or PA28, the 20S proteasome mediates ubiquitin-independent protein degradation. This type of proteolysis is required in several pathways including spermatogenesis (20S-PA200 complex) or generation of a subset of MHC class I-presented antigenic peptides (20S-PA28 complex). The sequence is that of Proteasome subunit alpha type-4 (PSMA4) from Bos taurus (Bovine).